We begin with the raw amino-acid sequence, 258 residues long: Imidazole glycerol phosphate synthase subunit HisF (258 aa).

Residues D11 and D130 contribute to the active site.

Belongs to the HisA/HisF family. In terms of assembly, heterodimer of HisH and HisF.

The protein localises to the cytoplasm. It carries out the reaction 5-[(5-phospho-1-deoxy-D-ribulos-1-ylimino)methylamino]-1-(5-phospho-beta-D-ribosyl)imidazole-4-carboxamide + L-glutamine = D-erythro-1-(imidazol-4-yl)glycerol 3-phosphate + 5-amino-1-(5-phospho-beta-D-ribosyl)imidazole-4-carboxamide + L-glutamate + H(+). It functions in the pathway amino-acid biosynthesis; L-histidine biosynthesis; L-histidine from 5-phospho-alpha-D-ribose 1-diphosphate: step 5/9. In terms of biological role, IGPS catalyzes the conversion of PRFAR and glutamine to IGP, AICAR and glutamate. The HisF subunit catalyzes the cyclization activity that produces IGP and AICAR from PRFAR using the ammonia provided by the HisH subunit. This Methylorubrum extorquens (strain CM4 / NCIMB 13688) (Methylobacterium extorquens) protein is Imidazole glycerol phosphate synthase subunit HisF.